Consider the following 365-residue polypeptide: Chorismate synthase (365 aa).

Residue Arg-47 participates in NADP(+) binding. Residues 124 to 126 (RAS), Gly-287, 302 to 306 (KPTAT), and Arg-328 each bind FMN.

The protein belongs to the chorismate synthase family. Homotetramer. It depends on FMNH2 as a cofactor.

It carries out the reaction 5-O-(1-carboxyvinyl)-3-phosphoshikimate = chorismate + phosphate. Its pathway is metabolic intermediate biosynthesis; chorismate biosynthesis; chorismate from D-erythrose 4-phosphate and phosphoenolpyruvate: step 7/7. Its function is as follows. Catalyzes the anti-1,4-elimination of the C-3 phosphate and the C-6 proR hydrogen from 5-enolpyruvylshikimate-3-phosphate (EPSP) to yield chorismate, which is the branch point compound that serves as the starting substrate for the three terminal pathways of aromatic amino acid biosynthesis. This reaction introduces a second double bond into the aromatic ring system. This Prochlorococcus marinus (strain MIT 9312) protein is Chorismate synthase.